We begin with the raw amino-acid sequence, 386 residues long: Interleukin-13 receptor subunit alpha-2 (386 aa).

Positions 1 to 21 are cleaved as a signal peptide; that stretch reads MAFIHLDVGFLYTLLVCTAFG. Residues 22 to 338 are Extracellular-facing; that stretch reads SMLSNAEIKV…CWKGDIWKET (317 aa). 3 consecutive Fibronectin type-III domains span residues 33-133, 138-234, and 239-338; these read PPQD…SPQG, KIQD…LQNI, and PPDY…WKET. Cysteines 64 and 112 form a disulfide. Residue asparagine 114 is glycosylated (N-linked (GlcNAc...) asparagine). Cystine bridges form between cysteine 144–cysteine 154 and cysteine 183–cysteine 196. 2 N-linked (GlcNAc...) asparagine glycosylation sites follow: asparagine 214 and asparagine 298. A disulfide bond links cysteine 268 and cysteine 315. The WSXWS motif signature appears at 321-325; the sequence is WSEWS. A helical membrane pass occupies residues 339–359; it reads LVFFLIPFAFVSIFVLVITCL. Topologically, residues 360–386 are cytoplasmic; it reads LLYKQRALLKTIFHTKKEVFSHQDTFC.

Belongs to the type I cytokine receptor family. Type 5 subfamily. Interacts with IL4RA. Interacts with high affinity to interleukin-13 (IL13), but not to interleukin-4 (IL4). Cleaved by MMP8 leading to a soluble form that is also able to interact with IL13. Expressed in kidney, placenta, liver, skeletal muscle and thymus. Expression was not seen in whole blood and heart.

The protein resides in the cell membrane. Its function is as follows. Cell surface receptor that plays a role in the regulation of IL-13-mediated responses. Functions as a decoy receptor that inhibits IL-13- and IL-4-mediated signal transduction via the JAK-STAT pathway and thereby modulates immune responses and inflammation. Serves as a functional signaling receptor for IL-13 in an alternative pathway involving AP-1 ultimately leading to the production of TGFB1. This chain is Interleukin-13 receptor subunit alpha-2 (IL13RA2), found in Canis lupus familiaris (Dog).